The primary structure comprises 288 residues: ATP synthase gamma chain (288 aa).

Belongs to the ATPase gamma chain family. In terms of assembly, F-type ATPases have 2 components, CF(1) - the catalytic core - and CF(0) - the membrane proton channel. CF(1) has five subunits: alpha(3), beta(3), gamma(1), delta(1), epsilon(1). CF(0) has three main subunits: a, b and c.

The protein localises to the cell inner membrane. In terms of biological role, produces ATP from ADP in the presence of a proton gradient across the membrane. The gamma chain is believed to be important in regulating ATPase activity and the flow of protons through the CF(0) complex. This chain is ATP synthase gamma chain, found in Glaesserella parasuis serovar 5 (strain SH0165) (Haemophilus parasuis).